Consider the following 463-residue polypeptide: L-seryl-tRNA(Sec) selenium transferase (463 aa).

Lys295 carries the N6-(pyridoxal phosphate)lysine modification.

Belongs to the SelA family. In terms of assembly, homodecamer; pentamer of dimers. Binds only one seryl-tRNA(Sec) per dimer. Pyridoxal 5'-phosphate is required as a cofactor.

It is found in the cytoplasm. It catalyses the reaction L-seryl-tRNA(Sec) + selenophosphate + H(+) = L-selenocysteinyl-tRNA(Sec) + phosphate. Its pathway is aminoacyl-tRNA biosynthesis; selenocysteinyl-tRNA(Sec) biosynthesis; selenocysteinyl-tRNA(Sec) from L-seryl-tRNA(Sec) (bacterial route): step 1/1. Its function is as follows. Converts seryl-tRNA(Sec) to selenocysteinyl-tRNA(Sec) required for selenoprotein biosynthesis. The sequence is that of L-seryl-tRNA(Sec) selenium transferase from Escherichia coli O7:K1 (strain IAI39 / ExPEC).